A 939-amino-acid polypeptide reads, in one-letter code: MITHGFYARTRHKHKLKKTFIMLSAGLGLFFYVNQNSFANGENYFKLGSDSKLLTHNSYQNRLFYTLKTGETVADLSKSQDINLSTIWSLNKHLYSSESEMMKAAPGQQIILPLKKLPFEYSALPLLGSAPLVAAGGVAGHTNKLTKMSPDVTKSNMTDDKALNYAAQQAASLGSQLQSRSLNGDYAKDTALGIAGNQASSQLQAWLQHYGTAEVNLQSGNNFDGSSLDFLLPFYDSEKMLAFGQVGARYIDSRFTANLGAGQRFFLPENMLGYNVFIDQDFSGDNTRLGIGGEYWRDYFKSSVNGYFRMSGWHESYNKKDYDERPANGFDIRFNGYLPSYPALGAKLMYEQYYGDNVALFNSDKLQSNPGAATVGVNYTPIPLVTMGIDYRHGTGNENDLLYSMQFRYQFDKPWSQQIEPQYVNELRTLSGSRYDLVQRNNNIILEYKKQDILSLNIPHDINGTERSTQKIQLIVKSKYGLDRIVWDDSALRSQGGQIQHSGSQSAQDYQAILPAYVQGGSNVYKVTARAYDRNGNSSNNVLLTITVLSNGQVVDQVGVTDFTADKTSAKADGTEAITYTATVKKNGVAQANVPVSFNIVSGTAVLSANSANTNGSGKATVTLKSDKPGQVVVSAKTAEMTSALNANAVIFVDQTKASITEIKADKTTAVANGQDAITYTVKVMKGDKPVSNQEVTFTTTLGKLSNSTEKTDTNGYAKVTLTSTTPGKSLVSARVSDVAVDVKAPEVEFFTTLTIDDGNIEIVGTGVKGKLPTVWLQYGQVNLKASGGNGKYTWRSANPAIASVDASSGQVTLKEKGTTTISVISSDNQTATYTIATPNSLIVPNMSKRVTYNDAVNTCKNFGGKLPSSQNELENVFKAWGAANKYEYYKSSQTIISWVQQTAQDAKSGVASTYDLVKQNPLNNIKASESNAYATCVK.

The N-terminal stretch at 1-41 (MITHGFYARTRHKHKLKKTFIMLSAGLGLFFYVNQNSFANG) is a signal peptide. The peptidoglycan-binding stretch occupies residues 40-153 (NGENYFKLGS…KLTKMSPDVT (114 aa)). Residues 40–153 (NGENYFKLGS…KLTKMSPDVT (114 aa)) form a sufficient for homodimerization region. The required for periplasmic localization stretch occupies residues 40–212 (NGENYFKLGS…LQAWLQHYGT (173 aa)). In terms of domain architecture, LysM spans 63–112 (LFYTLKTGETVADLSKSQDINLSTIWSLNKHLYSSESEMMKAAPGQQIIL). The segment at 189 to 430 (DTALGIAGNQ…PQYVNELRTL (242 aa)) is inverse autotransporter. The signature sequence for beta-barrel assembly machinery (BAM), which recognizes the unfolded beta-barrel in the periplasm stretch occupies residues 402-411 (LYSMQFRYQF). Big-1 domains are found at residues 560-653 (VTDF…VIFV) and 660-751 (ITEI…VEFF). The segment at 750–939 (FFTTLTIDDG…ESNAYATCVK (190 aa)) is required and sufficient for interaction with intimin receptor Tir. The tract at residues 842–939 (LIVPNMSKRV…ESNAYATCVK (98 aa)) is C-type lectin domain. The interval 842–939 (LIVPNMSKRV…ESNAYATCVK (98 aa)) is intimin receptor Tir-binding. The cysteines at positions 860 and 937 are disulfide-linked.

Belongs to the intimin/invasin family. As to quaternary structure, homodimer. Interacts with Tir.

It localises to the cell outer membrane. An inverse autotransporter. Adhesin, which mediates attachment to the human intestine epithelial cells. Necessary for the production of attaching and effacing lesions on infected human tissue culture cells. Anchored to the outer membrane by binding to peptidoglycan (PGN) via its periplasmic domain, thus helping in receptor interactions during host invasion. PGN-binding may also aid in resisting mechanical and chemical stress during transit of the bacterium through the gastrointestinal tract of the host. Periplasmic domain binds purified E.coli PGN sacculi under acidic conditions in vitro and in vivo, but does not bind to chitin. Periplasmic domain binds PGN sacculi with an apparent dissociation constant (Kd) of 0.8 uM. No binding to PGN in vitro at normal physiological pH 7.4. The protein is Intimin of Escherichia coli O127:H6 (strain E2348/69 / EPEC).